Consider the following 499-residue polypeptide: Topoisomerase I damage affected protein 11 (499 aa).

Residues 32–62 (RKTGRKIRSASSNGYRLEHHRTSSAGSMHSQ) are disordered. Residues 179–231 (ALLQSLATKELELLECKQKIEDLKKQTQHEEQNYTRRARELHELKEQVSKHLD) adopt a coiled-coil conformation. At T236 the chain carries Phosphothreonine. S244 and S286 each carry phosphoserine. Disordered stretches follow at residues 252–306 (LESR…SKQS), 332–377 (WDDS…SVSR), and 400–499 (DVIT…QKLS). Polar residues predominate over residues 257 to 287 (ENAGNSSLPSSVSKPKNMGHQSTNQSRSVSP). Residues 290–301 (IQERRQRDDSSD) are compositionally biased toward basic and acidic residues. 2 stretches are compositionally biased toward polar residues: residues 332 to 359 (WDDS…QQYD) and 368 to 377 (KSPSQGSVSR). Positions 403–421 (TDNRCDPVYKSDRQHEQKK) are enriched in basic and acidic residues. Residues 470-479 (TREKKSKRSS) are compositionally biased toward basic residues.

This sequence belongs to the TDA11 family.

It is found in the cytoplasm. This chain is Topoisomerase I damage affected protein 11 (TDA11), found in Saccharomyces cerevisiae (strain Zymaflore VL3) (Baker's yeast).